We begin with the raw amino-acid sequence, 441 residues long: tRNA (adenine(37)-N6)-methyltransferase (441 aa).

The TsaA-like domain occupies 30 to 168; the sequence is TEPVGYLESC…YIAEYDSPQN (139 aa). Residues 47–49, 90–91, Arg117, Leu127, and 148–151 contribute to the S-adenosyl-L-methionine site; these read PRQ, HK, and IHGT. Residues 179–192 are compositionally biased toward polar residues; the sequence is QNNQHTPNTVSQSD. Disordered regions lie at residues 179 to 231 and 264 to 284; these read QNNQ…EENY and SSVAEEQIGPYCPEKSFSEKG.

It belongs to the tRNA methyltransferase O family.

The enzyme catalyses N(6)-L-threonylcarbamoyladenosine(37) in tRNA + S-adenosyl-L-methionine = N(6)-methyl,N(6)-L-threonylcarbamoyladenosine(37) in tRNA + S-adenosyl-L-homocysteine + H(+). S-adenosyl-L-methionine-dependent methyltransferase responsible for the addition of the methyl group in the formation of N6-methyl-N6-threonylcarbamoyladenosine at position 37 (m(6)t(6)A37) of the tRNA anticodon loop of tRNA(Ser)(GCU). The methyl group of m(6)t(6)A37 may improve the efficiency of the tRNA decoding ability. The sequence is that of tRNA (adenine(37)-N6)-methyltransferase from Homo sapiens (Human).